The sequence spans 502 residues: MKNQSRVLNSELGDFDLSVLWDQILNFEGYGSYCFRPMDMDGYHKRSAGLNPCKHSGFSHSSRPMAPGIYRYPEVKSSLRRQVHAPVRILNSGRDRSTRQGSGNVLGTFLTRNNDMWKRNALDSSLRYRTDREVIDVDDELGDVEMISDDTSREGVENVAMEVDEVEEKAEMGNGLFSEVASLKNGSLRVGECSKANSSSLVVNRPVTDVTSFEAYRKVLESAVNRTSKLKDRGFVDFFKERGRALLRSLSSFWRQDEEPVEVVQREAFVPLSREEETAVRRAFSANDSNILVTHKNSNIDITGKILRCLKPGKWLNDEVINLYMVLLKEREAREPKKFLKCHFFNTFFFTKLVNSATGYNYGAVRRWTSMKRLGYHLKDCDKIFIPIHMNIHWTLAVINIKDQKFQYLDSFKGREPKILDALARYFVDEVRDKSEVDLDVSRWRQEFVQDLPMQRNGFDCGMFMVKYIDFYSRGLDLCFTQEQMPYFRARTAKEILQLKAE.

Active-site residues include H393, D410, and C461.

Belongs to the peptidase C48 family.

Protease that catalyzes two essential functions in the SUMO pathway: processing of full-length SUMOs to their mature forms and deconjugation of SUMO from targeted proteins. Cleaves precursors of SUM1 and SUM2, and very inefficiently of SUM3. Seems to be the only ULP1 able to cleave SUM3 precursors. Cleaves SUMO peptides better than SUMO-conjugated proteins. The sequence is that of Ubiquitin-like-specific protease 1A (ULP1A) from Arabidopsis thaliana (Mouse-ear cress).